The sequence spans 300 residues: Ribosomal protein bS6--L-glutamate ligase (300 aa).

Positions 104 to 287 constitute an ATP-grasp domain; that stretch reads LQLLARQGID…IAGRMIQWIE (184 aa). Residues lysine 141, 178–179, aspartate 187, and 211–213 contribute to the ATP site; these read EY and RSN. Residues aspartate 248, glutamate 260, and asparagine 262 each contribute to the Mg(2+) site. Mn(2+) is bound by residues aspartate 248, glutamate 260, and asparagine 262.

It belongs to the RimK family. Mg(2+) is required as a cofactor. The cofactor is Mn(2+).

Its function is as follows. An L-glutamate ligase that catalyzes the ATP-dependent post-translational addition of glutamate residues to the C-terminus of ribosomal protein bS6 (RpsF). Is also able to catalyze the synthesis of poly-alpha-glutamate in vitro, via ATP hydrolysis from unprotected glutamate as substrate. The number of glutamate residues added to either RpsF or to poly-alpha-glutamate changes with pH. This Salmonella schwarzengrund (strain CVM19633) protein is Ribosomal protein bS6--L-glutamate ligase.